An 89-amino-acid chain; its full sequence is Small ribosomal subunit protein uS17 (89 aa).

It belongs to the universal ribosomal protein uS17 family. Part of the 30S ribosomal subunit.

In terms of biological role, one of the primary rRNA binding proteins, it binds specifically to the 5'-end of 16S ribosomal RNA. The polypeptide is Small ribosomal subunit protein uS17 (Albidiferax ferrireducens (strain ATCC BAA-621 / DSM 15236 / T118) (Rhodoferax ferrireducens)).